The chain runs to 179 residues: Large ribosomal subunit protein uL5 (179 aa).

Belongs to the universal ribosomal protein uL5 family. As to quaternary structure, part of the 50S ribosomal subunit; part of the 5S rRNA/L5/L18/L25 subcomplex. Contacts the 5S rRNA and the P site tRNA. Forms a bridge to the 30S subunit in the 70S ribosome.

Functionally, this is one of the proteins that bind and probably mediate the attachment of the 5S RNA into the large ribosomal subunit, where it forms part of the central protuberance. In the 70S ribosome it contacts protein S13 of the 30S subunit (bridge B1b), connecting the 2 subunits; this bridge is implicated in subunit movement. Contacts the P site tRNA; the 5S rRNA and some of its associated proteins might help stabilize positioning of ribosome-bound tRNAs. The sequence is that of Large ribosomal subunit protein uL5 from Parasynechococcus marenigrum (strain WH8102).